We begin with the raw amino-acid sequence, 263 residues long: Eukaryotic translation initiation factor 3 subunit J-B (263 aa).

2 stretches are compositionally biased toward acidic residues: residues 1-13 and 30-50; these read MADS…DNFE and EGED…EEKE. Disordered regions lie at residues 1–75 and 214–235; these read MADS…DKIK and KQKQ…VPGG. A coiled-coil region spans residues 30–127; sequence EGEDEEEDVK…EADMELAREA (98 aa). Basic and acidic residues predominate over residues 51-75; it reads EEKKVEQKIAEVKPPEKKKLSDKIK.

It belongs to the eIF-3 subunit J family. As to quaternary structure, component of the eukaryotic translation initiation factor 3 (eIF-3) complex, which is composed of 13 subunits: eif3a, eif3b, eif3c, eif3d, eif3e, eif3f, eif3g, eif3h, eif3i, eif3j, eif3k, eif3l and eif3m.

It localises to the cytoplasm. Component of the eukaryotic translation initiation factor 3 (eIF-3) complex, which is involved in protein synthesis of a specialized repertoire of mRNAs and, together with other initiation factors, stimulates binding of mRNA and methionyl-tRNAi to the 40S ribosome. The eIF-3 complex specifically targets and initiates translation of a subset of mRNAs involved in cell proliferation. The sequence is that of Eukaryotic translation initiation factor 3 subunit J-B (eif3jb) from Danio rerio (Zebrafish).